The following is a 980-amino-acid chain: BEM1-interacting protein 1 (980 aa).

The SH3 domain maps to 13 to 77 (KSFPLYIAVN…PAVFTKRIAI (65 aa)). A phosphoserine mark is found at serine 104, serine 106, and serine 128. Residues 139–163 (SGSVEQEVSKSPTRVPEVSTPQLQD) are disordered. A compositionally biased stretch (polar residues) spans 141-150 (SVEQEVSKSP). Phosphothreonine occurs at positions 151 and 158. Serine 209 is subject to Phosphoserine. One can recognise an SAM domain in the interval 228 to 292 (WSPEEVTDYF…FKEIRNIKSA (65 aa)). 2 disordered regions span residues 333 to 356 (SKCNKLSSESSDRKSSSVTTELQR) and 390 to 438 (IFES…KNKN). Phosphoserine occurs at positions 393 and 412. Over residues 397 to 412 (APKPPSYPSPVQPPQS) the composition is skewed to pro residues. Residues 415–438 (FNNRYTNNNARFPPQTTYPPKNKN) show a composition bias toward polar residues. Phosphoserine occurs at positions 525 and 528. The segment at 544–762 (SSFDEEETKQ…AKKQQTSAFT (219 aa)) is disordered. The span at 573 to 582 (HSRDASLSEM) shows a compositional bias: basic and acidic residues. Serine 589, serine 590, and serine 593 each carry phosphoserine. Composition is skewed to low complexity over residues 589-608 (SSILSFFSSKSQSNPTSPTK) and 621-638 (HSRSQSNSYSHARSQSYS). Residues serine 644 and serine 655 each carry the phosphoserine modification. Polar residues-rich tracts occupy residues 645-662 (LVTSPLKTSLSPINSKSN) and 669-683 (ETPTSSNNKEAVSQP). Over residues 687–703 (KHKHKHKHKSKHKHKNS) the composition is skewed to basic residues. Serine 735 carries the post-translational modification Phosphoserine. Polar residues predominate over residues 737 to 746 (SELTQKSTKS). The region spanning 776–895 (TADCSGWMSK…WLSAIIKATI (120 aa)) is the PH domain. A Phosphothreonine modification is found at threonine 919. The disordered stretch occupies residues 930 to 980 (LRDAEEEEGRDQFGWDDTQNKRNSNYPIEQDQFETSDYLESSAFEYPGGRL). Polar residues predominate over residues 950-968 (KRNSNYPIEQDQFETSDYL).

Interacts with BEM1.

The protein resides in the bud. It is found in the bud neck. In terms of biological role, functions redundantly with BOI2 to promote the fusion of secretory vesicles with the plasma membrane at sites of polarized growth. This is BEM1-interacting protein 1 from Saccharomyces cerevisiae (strain ATCC 204508 / S288c) (Baker's yeast).